Reading from the N-terminus, the 232-residue chain is 5'-methylthioadenosine/S-adenosylhomocysteine nucleosidase (232 aa).

Glu-12 serves as the catalytic Proton acceptor. Substrate contacts are provided by residues Gly-78, Ile-152, and 173 to 174 (ME). The active-site Proton donor is Asp-197.

It belongs to the PNP/UDP phosphorylase family. MtnN subfamily. Homodimer.

It catalyses the reaction S-adenosyl-L-homocysteine + H2O = S-(5-deoxy-D-ribos-5-yl)-L-homocysteine + adenine. The enzyme catalyses S-methyl-5'-thioadenosine + H2O = 5-(methylsulfanyl)-D-ribose + adenine. The catalysed reaction is 5'-deoxyadenosine + H2O = 5-deoxy-D-ribose + adenine. Its pathway is amino-acid biosynthesis; L-methionine biosynthesis via salvage pathway; S-methyl-5-thio-alpha-D-ribose 1-phosphate from S-methyl-5'-thioadenosine (hydrolase route): step 1/2. Its function is as follows. Catalyzes the irreversible cleavage of the glycosidic bond in both 5'-methylthioadenosine (MTA) and S-adenosylhomocysteine (SAH/AdoHcy) to adenine and the corresponding thioribose, 5'-methylthioribose and S-ribosylhomocysteine, respectively. Also cleaves 5'-deoxyadenosine, a toxic by-product of radical S-adenosylmethionine (SAM) enzymes, into 5-deoxyribose and adenine. Thus, is required for in vivo function of the radical SAM enzymes biotin synthase and lipoic acid synthase, that are inhibited by 5'-deoxyadenosine accumulation. This is 5'-methylthioadenosine/S-adenosylhomocysteine nucleosidase from Salmonella agona (strain SL483).